The chain runs to 126 residues: Small ribosomal subunit protein uS12 (126 aa).

At D89 the chain carries 3-methylthioaspartic acid.

It belongs to the universal ribosomal protein uS12 family. In terms of assembly, part of the 30S ribosomal subunit. Contacts proteins S8 and S17. May interact with IF1 in the 30S initiation complex.

In terms of biological role, with S4 and S5 plays an important role in translational accuracy. Interacts with and stabilizes bases of the 16S rRNA that are involved in tRNA selection in the A site and with the mRNA backbone. Located at the interface of the 30S and 50S subunits, it traverses the body of the 30S subunit contacting proteins on the other side and probably holding the rRNA structure together. The combined cluster of proteins S8, S12 and S17 appears to hold together the shoulder and platform of the 30S subunit. This is Small ribosomal subunit protein uS12 from Polynucleobacter necessarius subsp. necessarius (strain STIR1).